Here is a 139-residue protein sequence, read N- to C-terminus: NADPH-dependent 7-cyano-7-deazaguanine reductase (139 aa).

Catalysis depends on C34, which acts as the Thioimide intermediate. D41 (proton donor) is an active-site residue. Substrate-binding positions include 56–58 and 75–76; these read VEL and HE.

It belongs to the GTP cyclohydrolase I family. QueF type 1 subfamily.

It is found in the cytoplasm. It carries out the reaction 7-aminomethyl-7-carbaguanine + 2 NADP(+) = 7-cyano-7-deazaguanine + 2 NADPH + 3 H(+). Its pathway is tRNA modification; tRNA-queuosine biosynthesis. Functionally, catalyzes the NADPH-dependent reduction of 7-cyano-7-deazaguanine (preQ0) to 7-aminomethyl-7-deazaguanine (preQ1). The sequence is that of NADPH-dependent 7-cyano-7-deazaguanine reductase from Thiobacillus denitrificans (strain ATCC 25259 / T1).